A 563-amino-acid polypeptide reads, in one-letter code: Protein NRT1/ PTR FAMILY 5.9 (563 aa).

A helical transmembrane segment spans residues 56–76; it reads TWAGFTSMLPLFSAPLADTYW. Position 81 is a phosphothreonine (threonine 81). 10 helical membrane-spanning segments follow: residues 82–102, 110–130, 168–188, 194–214, 317–337, 362–382, 394–414, 441–461, 479–499, and 528–548; these read ILASSSVYFVGLVGLTWTAFA, TISSYFLYSSLCLVSIGLGVL, FFQLWYFGVCTGSLMGVTVMA, FGWVLGFAIPGIVIFLSILVF, FPIWMMLLMFAVIFQLPATFF, TITLSIILLMPLYDKILIPIT, VMERMGVGMFLSIIAIVIAAI, IFWLLPQYILLGISDIFTVVG, FALYTSVFGVGSFVSAALISI, and WLLALTSTISFVVYIFLCKFF.

Belongs to the major facilitator superfamily. Proton-dependent oligopeptide transporter (POT/PTR) (TC 2.A.17) family. As to expression, expressed in roots and flowers.

Its subcellular location is the membrane. In Arabidopsis thaliana (Mouse-ear cress), this protein is Protein NRT1/ PTR FAMILY 5.9 (NPF5.9).